Reading from the N-terminus, the 273-residue chain is Undecaprenyl-diphosphatase (273 aa).

The next 8 helical transmembrane spans lie at Ile-3–Pro-23, Ala-47–Ile-67, Leu-90–Leu-110, Ile-120–Ser-140, Ile-148–Ala-168, Pro-186–Val-206, Leu-217–Ala-237, and Trp-249–Gly-269.

Belongs to the UppP family.

It is found in the cell inner membrane. It catalyses the reaction di-trans,octa-cis-undecaprenyl diphosphate + H2O = di-trans,octa-cis-undecaprenyl phosphate + phosphate + H(+). Catalyzes the dephosphorylation of undecaprenyl diphosphate (UPP). Confers resistance to bacitracin. This Thermosynechococcus vestitus (strain NIES-2133 / IAM M-273 / BP-1) protein is Undecaprenyl-diphosphatase.